A 183-amino-acid chain; its full sequence is Adenine phosphoribosyltransferase (183 aa).

Belongs to the purine/pyrimidine phosphoribosyltransferase family. Homodimer.

The protein localises to the cytoplasm. The catalysed reaction is AMP + diphosphate = 5-phospho-alpha-D-ribose 1-diphosphate + adenine. Its pathway is purine metabolism; AMP biosynthesis via salvage pathway; AMP from adenine: step 1/1. Catalyzes a salvage reaction resulting in the formation of AMP, that is energically less costly than de novo synthesis. The chain is Adenine phosphoribosyltransferase from Shewanella piezotolerans (strain WP3 / JCM 13877).